A 2009-amino-acid polypeptide reads, in one-letter code: Sodium channel protein type 1 subunit alpha (2009 aa).

The Cytoplasmic segment spans residues 1 to 128 (MEQTVLVPPG…KIAIKILVHS (128 aa)). The span at 28–48 (RIAEEKAKNPKPDKKDDDENG) shows a compositional bias: basic and acidic residues. Residues 28–60 (RIAEEKAKNPKPDKKDDDENGPKPNSDLEAGKN) are disordered. One copy of the I repeat lies at 110-454 (ILTPFNPLRK…QQMLEQLKKQ (345 aa)). Residues 129 to 146 (LFSMLIMCTILTNCVFMT) traverse the membrane as a helical segment. Over 147–152 (MSNPPD) the chain is Extracellular. A helical membrane pass occupies residues 153 to 177 (WTKNVEYTFTGIYTFESLIKIIARG). The Cytoplasmic portion of the chain corresponds to 178–188 (FCLEDFTFLRD). Residues 189-205 (PWNWLDFTVITFAYVTE) form a helical membrane-spanning segment. Residues 206-213 (FVDLGNVS) are Extracellular-facing. A helical transmembrane segment spans residues 214 to 235 (ALRTFRVLRALKTISVIPGLKT). The Cytoplasmic segment spans residues 236 to 245 (IVGALIQSVK). Residues 246 to 269 (KLSDVMILTVFCLSVFALIGLQLF) traverse the membrane as a helical segment. Over 270–369 (MGNLRNKCVQ…YGYTSFDTFS (100 aa)) the chain is Extracellular. Cystine bridges form between Cys277-Cys345 and Cys336-Cys351. N-linked (GlcNAc...) asparagine glycans are attached at residues Asn295, Asn301, Asn306, and Asn338. Positions 370–384 (WAFLSLFRLMTQDFW) form an intramembrane region, pore-forming. The Extracellular portion of the chain corresponds to 385 to 397 (ENLYQLTLRAAGK). The chain crosses the membrane as a helical span at residues 398–423 (TYMIFFVLVIFLGSFYLINLILAVVA). Residues 424 to 768 (MAYEEQNQAT…HIVNLVVMDP (345 aa)) are Cytoplasmic-facing. The disordered stretch occupies residues 455-528 (QEAAQQAAAT…EFHKSESEDS (74 aa)). Over residues 456 to 466 (EAAQQAAATTA) the composition is skewed to low complexity. Ser470 is modified (phosphoserine). A compositionally biased stretch (low complexity) spans 479–492 (LSDSSSEASKLSSK). A compositionally biased stretch (basic residues) spans 495 to 506 (KERRNRRKKRKQ). Positions 507–528 (KEQSGGEEKDDDEFHKSESEDS) are enriched in basic and acidic residues. Phosphoserine occurs at positions 523, 525, 550, 551, 607, and 730. Positions 584 to 627 (VGSENDFADDEHSTFEDNESRRDSLFVPRRHGERRNSNLSQTSR) are disordered. Positions 593–607 (DEHSTFEDNESRRDS) are enriched in basic and acidic residues. Residues 750 to 1022 (CSPYWLKVKH…QIAVDRMHKG (273 aa)) form an II repeat. Residues 769–787 (FVDLAITICIVLNTLFMAM) form a helical membrane-spanning segment. Topologically, residues 788-797 (EHYPMTEHFN) are extracellular. Residues 798 to 820 (HVLTVGNLVFTGIFTAEMFLKII) traverse the membrane as a helical segment. Over 821–830 (AMDPYYYFQE) the chain is Cytoplasmic. Residues 831–849 (GWNIFDGFIVTLSLVELGL) traverse the membrane as a helical segment. The Extracellular segment spans residues 850–854 (ANVEG). Residues 855–874 (LSVLRSFRLLRVFKLAKSWP) form a helical membrane-spanning segment. The Cytoplasmic portion of the chain corresponds to 875-891 (TLNMLIKIIGNSVGALG). Residues 892–912 (NLTLVLAIIVFIFAVVGMQLF) traverse the membrane as a helical segment. At 913–938 (GKSYKDCVCKIATDCKLPRWHMNDFF) the chain is on the extracellular side. A disulfide bridge connects residues Cys921 and Cys927. An intramembrane region (pore-forming) is located at residues 939 to 952 (HSFLIVFRVLCGEW). Residues 953-965 (IETMWDCMEVAGQ) are Extracellular-facing. Residues Cys959 and Cys968 are joined by a disulfide bond. The chain crosses the membrane as a helical span at residues 966–992 (AMCLTVFMMVMVIGNLVVLNLFLALLL). Over 993–1218 (SSFSADNLAA…RTCFRIVEHN (226 aa)) the chain is Cytoplasmic. The interval 1129–1163 (TEDFSSESDLEESKEKLNESSSSSEGSTVDIGAPA) is disordered. The stretch at 1200-1514 (RGKQWWNLRR…KKYYNAMKKL (315 aa)) is one III repeat. A helical membrane pass occupies residues 1219–1237 (WFETFIVFMILLSSGALAF). Residues 1238-1250 (EDIYIDQRKTIKT) lie on the Extracellular side of the membrane. A helical membrane pass occupies residues 1251–1276 (MLEYADKVFTYIFILEMLLKWVAYGY). Over 1277 to 1278 (QT) the chain is Cytoplasmic. Residues 1279–1304 (YFTNAWCWLDFLIVDVSLVSLTANAL) form a helical membrane-spanning segment. The Extracellular segment spans residues 1305-1313 (GYSELGAIK). A helical membrane pass occupies residues 1314-1332 (SLRTLRALRPLRALSRFEG). At 1333-1345 (MRVVVNALLGAIP) the chain is on the cytoplasmic side. The chain crosses the membrane as a helical span at residues 1346 to 1369 (SIMNVLLVCLIFWLIFSIMGVNLF). The Extracellular portion of the chain corresponds to 1370–1415 (AGKFYHCVNTTTGDIFEISEVNNHSDCLKLIERNETARWKNVKVNF). A disulfide bridge connects residues Cys1376 and Cys1396. An intramembrane region (pore-forming) is located at residues 1416–1433 (DNVGFGYLSLLQVATFKG). The Extracellular segment spans residues 1434–1457 (WMDIMYAAVDSRNVELQPKYEESL). Residues 1458–1483 (YMYLYFVIFIIFGSFFTLNLFIGVII) traverse the membrane as a helical segment. Topologically, residues 1484 to 1541 (DNFNQQKKKFGGQDIFMTEEQKKYYNAMKKLGSKKPQKPIPRPGNKFQGMVFDFVTRQ) are cytoplasmic. Phosphoserine; by PKC is present on Ser1516. One copy of the IV repeat lies at 1523-1821 (IPRPGNKFQG…WEKFDPDATQ (299 aa)). A helical membrane pass occupies residues 1542–1560 (VFDISIMILICLNMVTMMV). The Extracellular segment spans residues 1561–1571 (ETDDQSDYVTS). Positions 1561–1571 (ETDDQSDYVTS) are S1-S2 loop of repeat IV. Residues 1572-1593 (ILSRINLVFIVLFTGECVLKLI) form a helical membrane-spanning segment. Over 1594 to 1601 (SLRHYYFT) the chain is Cytoplasmic. Residues 1602 to 1623 (IGWNIFDFVVVILSIVGMFLAE) form a helical membrane-spanning segment. An S3b-S4 loop of repeat IV region spans residues 1619–1636 (MFLAELIEKYFVSPTLFR). Topologically, residues 1624-1636 (LIEKYFVSPTLFR) are extracellular. The helical transmembrane segment at 1637-1655 (VIRLARIGRILRLIKGAKG) threads the bilayer. Residues 1656–1665 (IRTLLFALMM) are Cytoplasmic-facing. A helical transmembrane segment spans residues 1666–1688 (SLPALFNIGLLLFLVMFIYAIFG). At 1689-1711 (MSNFAYVKREVGIDDMFNFETFG) the chain is on the extracellular side. Positions 1712–1726 (NSMICLFQITTSAGW) form an intramembrane region, pore-forming. The Extracellular segment spans residues 1727-1759 (DGLLAPILNSKPPDCDPNKVNPGSSVKGDCGNP). Cys1741 and Cys1756 are joined by a disulfide. Residues 1760 to 1788 (SVGIFFFVSYIIISFLVVVNMYIAVILEN) traverse the membrane as a helical segment. The Cytoplasmic segment spans residues 1789–2009 (FSVATEESAE…EGKDEKAKGK (221 aa)). In terms of domain architecture, IQ spans 1915–1944 (EEVSAVIIQRAYRRHLLKRTVKQASFTYNK). Residues 1984-2009 (PSYDRVTKPIVEKHEQEGKDEKAKGK) form a disordered region. Basic and acidic residues predominate over residues 1988–2009 (RVTKPIVEKHEQEGKDEKAKGK).

It belongs to the sodium channel (TC 1.A.1.10) family. Nav1.1/SCN1A subfamily. As to quaternary structure, the Nav1.1 voltage-gated sodium channel consists of an ion-conducting alpha subunit SCN1A which is functional on its own regulated by one or more beta-1 (SCN1B), beta-2 (SCN2B), beta-3 (SCN3B) and beta-4 (SCN4B) subunits. SCN1B and SCN3B are non-covalently associated with SCN1A. SCN2B and SCN4B are disulfide-linked to SCN1A. SCN1B regulates both the expression at the plasma membrane and the voltage dependence of Nav1.1 inactivation. SCN3B and SCN4B reduce Nav1.1 conductance. Probably interacts with TMEM233; modulates the gating properties of NaV1.1. Interacts with FGF13; regulates the steady-state inactivation of Nav.1.1. Phosphorylation at Ser-1516 by PKC in a highly conserved cytoplasmic loop slows inactivation of the sodium channel and reduces peak sodium currents. In terms of tissue distribution, present in cerebellar Purkinje neurons (at protein level). Expressed by myelinated, non-C-fiber neurons in sensory ganglia.

The protein localises to the cell membrane. It catalyses the reaction Na(+)(in) = Na(+)(out). Its activity is regulated as follows. Activated by the spider toxins Hm1a and Hm1b (H.maculata, AC P60992 and AC P0DOC5) eliciting acute pain and mechanical allodynia. Its function is as follows. Pore-forming subunit of Nav1.1, a voltage-gated sodium (Nav) channel that directly mediates the depolarizing phase of action potentials in excitable membranes. Navs, also called VGSCs (voltage-gated sodium channels) or VDSCs (voltage-dependent sodium channels), operate by switching between closed and open conformations depending on the voltage difference across the membrane. In the open conformation they allow Na(+) ions to selectively pass through the pore, along their electrochemical gradient. The influx of Na(+) ions provokes membrane depolarization, initiating the propagation of electrical signals throughout cells and tissues. By regulating the excitability of neurons, ensures that they respond appropriately to synaptic inputs, maintaining the balance between excitation and inhibition in brain neural circuits. Nav1.1 plays a role in controlling the excitability and action potential propagation from somatosensory neurons, thereby contributing to the sensory perception of mechanically-induced pain. This chain is Sodium channel protein type 1 subunit alpha, found in Mus musculus (Mouse).